Reading from the N-terminus, the 197-residue chain is Small ribosomal subunit protein uS2 (197 aa).

It belongs to the universal ribosomal protein uS2 family.

The chain is Small ribosomal subunit protein uS2 (rps2) from Archaeoglobus fulgidus (strain ATCC 49558 / DSM 4304 / JCM 9628 / NBRC 100126 / VC-16).